A 309-amino-acid chain; its full sequence is Homoserine O-succinyltransferase (309 aa).

Cys142 acts as the Acyl-thioester intermediate in catalysis. The substrate site is built by Lys163 and Ser192. The Proton acceptor role is filled by His235. Glu237 is an active-site residue. Arg249 is a substrate binding site.

The protein belongs to the MetA family.

The protein localises to the cytoplasm. The enzyme catalyses L-homoserine + succinyl-CoA = O-succinyl-L-homoserine + CoA. The protein operates within amino-acid biosynthesis; L-methionine biosynthesis via de novo pathway; O-succinyl-L-homoserine from L-homoserine: step 1/1. Functionally, transfers a succinyl group from succinyl-CoA to L-homoserine, forming succinyl-L-homoserine. The chain is Homoserine O-succinyltransferase from Citrobacter koseri (strain ATCC BAA-895 / CDC 4225-83 / SGSC4696).